The primary structure comprises 638 residues: MNDTIHATDAAHAPHSTQQHSMRALAIAAIGVVFGDIGTSPLYSLKEAFSPAHGIPLTEGSILGVISLLFWAIILVVGIKYLLFVMRADNNGEGGVLALMALSLRPLDSKTRVAGALMALGIFGACMFYGDAVITPAISVMSAVEGLEIATPHLSHLVLPITIVILIALFWIQRHGTALVGKLFGPIMVLWFVAIAALGVYHIVRVPGIMAAINPYYAASFMADHLLQAYVVLGSVVLVLTGAEALYADMGHFGAKPIRIAAYGLVMPSLVLNYFGQGALLIQNPKAIENPFFLLAPEWGLLPLVILSTVATVIASQAVISGAYSLTSQAIQLGYVPRMKVLHTSELAIGQIYVPVVNWLLLFVILCIVIGFKSSDNLAAAYGIAVTATMVITTVLAAVVMVKVWNWNRLLVGAIIAVFLAVDLGFFGANLLKVAQGGWLPLGIGALLFFLLMTWYKGRHIVKERTAADGIPLEPFLQGLLAHPPHRVSGTAIYLTGNDKLVPVSLLHNLKHNKVLHERTIFLTFVTRDIPYVRDDKRQTSRDAGGGLYIVRAEYGFNETPDVKAVLEEFGRTHDMTFELMDTSFFLARETVVPTHLPGMSIWRERVFAWMHQNAAKPTDFFSIPANRVVELGTKIEI.

The next 12 helical transmembrane spans lie at 25–45 (LAIA…LYSL), 65–85 (VISL…LLFV), 114–134 (AGAL…DAVI), 152–172 (PHLS…LFWI), 184–204 (FGPI…YHIV), 226–246 (LLQA…AEAL), 262–282 (AYGL…ALLI), 291–311 (PFFL…STVA), 352–372 (IYVP…VIGF), 382–402 (YGIA…VVMV), 410–430 (LLVG…FGAN), and 434–454 (VAQG…LLMT).

Belongs to the HAK/KUP transporter (TC 2.A.72) family.

Its subcellular location is the cell inner membrane. The catalysed reaction is K(+)(in) + H(+)(in) = K(+)(out) + H(+)(out). Transport of potassium into the cell. Likely operates as a K(+):H(+) symporter. This Burkholderia lata (strain ATCC 17760 / DSM 23089 / LMG 22485 / NCIMB 9086 / R18194 / 383) protein is Probable potassium transport system protein Kup.